Reading from the N-terminus, the 210-residue chain is Tissue inhibitor of metalloproteinase (210 aa).

The signal sequence occupies residues 1 to 27; sequence MDLRKHLGLLTLLLVAVFAFYGRPADA. C28 lines the Zn(2+) pocket. Involved in metalloproteinase-binding stretches follow at residues 28–31 and 93–94; these read CSCM and DA. 5 cysteine pairs are disulfide-bonded: C28/C96, C30/C118, C145/C195, C150/C155, and C165/C180. The NTR domain occupies 28-145; that stretch reads CSCMPSHPQT…SGGYAKATNC (118 aa).

This sequence belongs to the protease inhibitor I35 (TIMP) family. As to expression, expressed in heads of female and male adult flies. Expressed at the time of eclosion in unopened wings of adult flies. Strongly expressed at the tip of ovarian germarium region 1 where germline stem cells (GSCs) and cystoblasts reside and in region 2 of the germarium.

It is found in the secreted. Its function is as follows. Metalloproteinase inhibitor that acts on both matrix metalloproteinases Mmp1 and Mmp2 in vitro. Complexes with metalloproteinases and irreversibly inactivates them by binding to their catalytic zinc cofactor. Required for wing maturation which is the final step in morphogenesis of the adult fly. Involved in the negative regulation of developmental tissue invasion for imaginal disk eversion during metamorphosis by inhibiting Mmp-mediated basement membrane (BM) degradation. Required for oogenesis and for the long-term maintainance of germarial structure and shape in the adult ovaries. Required for maintaining composition and biophysical properties of the extracellular matrix (ECM), and for the normal organization and cyst production of the germline stem cell (GSC) niche. The protein is Tissue inhibitor of metalloproteinase of Drosophila melanogaster (Fruit fly).